Consider the following 241-residue polypeptide: Triosephosphate isomerase (241 aa).

9–11 (NWK) lines the substrate pocket. The Electrophile role is filled by His96. The Proton acceptor role is filled by Glu165. Residues Gly171, Ser204, and 225-226 (GG) contribute to the substrate site.

Belongs to the triosephosphate isomerase family. Homodimer.

It localises to the cytoplasm. It carries out the reaction D-glyceraldehyde 3-phosphate = dihydroxyacetone phosphate. It participates in carbohydrate biosynthesis; gluconeogenesis. It functions in the pathway carbohydrate degradation; glycolysis; D-glyceraldehyde 3-phosphate from glycerone phosphate: step 1/1. In terms of biological role, involved in the gluconeogenesis. Catalyzes stereospecifically the conversion of dihydroxyacetone phosphate (DHAP) to D-glyceraldehyde-3-phosphate (G3P). The chain is Triosephosphate isomerase from Prochlorococcus marinus (strain MIT 9301).